A 94-amino-acid chain; its full sequence is MPRSLKKSFFVDRHLLKKVEKSAENNKDKKPIRTWSRRSTIFPEMIGLTIAIHNGRLHVPVFISDEMVSHKLGEFAPTRTYRGHVAADRKAKKR.

This sequence belongs to the universal ribosomal protein uS19 family.

In terms of biological role, protein S19 forms a complex with S13 that binds strongly to the 16S ribosomal RNA. In Hamiltonella defensa subsp. Acyrthosiphon pisum (strain 5AT), this protein is Small ribosomal subunit protein uS19.